Consider the following 130-residue polypeptide: Peptide methionine sulfoxide reductase MsrB (130 aa).

A MsrB domain is found at 8 to 130 (LEEWRSMLDP…NSVCLDLVPR (123 aa)). Positions 47, 50, 96, and 99 each coordinate Zn(2+). Catalysis depends on C119, which acts as the Nucleophile.

This sequence belongs to the MsrB Met sulfoxide reductase family. It depends on Zn(2+) as a cofactor.

The enzyme catalyses L-methionyl-[protein] + [thioredoxin]-disulfide + H2O = L-methionyl-(R)-S-oxide-[protein] + [thioredoxin]-dithiol. This is Peptide methionine sulfoxide reductase MsrB from Pseudomonas fluorescens (strain ATCC BAA-477 / NRRL B-23932 / Pf-5).